The chain runs to 260 residues: 5'-nucleotidase SurE (260 aa).

Positions 13, 14, 44, and 102 each coordinate a divalent metal cation.

Belongs to the SurE nucleotidase family. Requires a divalent metal cation as cofactor.

The protein resides in the cytoplasm. The enzyme catalyses a ribonucleoside 5'-phosphate + H2O = a ribonucleoside + phosphate. Functionally, nucleotidase that shows phosphatase activity on nucleoside 5'-monophosphates. The polypeptide is 5'-nucleotidase SurE (Christiangramia forsetii (strain DSM 17595 / CGMCC 1.15422 / KT0803) (Gramella forsetii)).